The following is a 300-amino-acid chain: Virginiamycin B lyase (300 aa).

Residue His231 coordinates substrate. Mg(2+) is bound at residue Glu270. His272 serves as the catalytic Proton acceptor. Glu287 is a binding site for Mg(2+).

The protein belongs to the Vgb family. In terms of assembly, monomer. Mg(2+) serves as cofactor.

Its function is as follows. Inactivates the type B streptogramin antibiotics by linearizing the lactone ring at the ester linkage, generating a free phenylglycine carboxylate and converting the threonyl moiety into 2-amino-butenoic acid. The chain is Virginiamycin B lyase from Saccharopolyspora erythraea (strain ATCC 11635 / DSM 40517 / JCM 4748 / NBRC 13426 / NCIMB 8594 / NRRL 2338).